A 250-amino-acid polypeptide reads, in one-letter code: Flavin-dependent thymidylate synthase (250 aa).

The 227-residue stretch at 7–233 (LRVQLIAKTE…PQVFSDFEIV (227 aa)) folds into the ThyX domain. FAD is bound by residues S71, 95–97 (RHR), and Q103. DUMP contacts are provided by residues 92-95 (ELIR), 103-107 (QLSQR), and R172. The ThyX motif signature appears at 95-105 (RHRHFSYSQLS). Residues 188–190 (NYR) and H194 contribute to the FAD site. R199 lines the dUMP pocket. R199 serves as the catalytic Involved in ionization of N3 of dUMP, leading to its activation.

It belongs to the thymidylate synthase ThyX family. In terms of assembly, homotetramer. The cofactor is FAD.

It catalyses the reaction dUMP + (6R)-5,10-methylene-5,6,7,8-tetrahydrofolate + NADPH + H(+) = dTMP + (6S)-5,6,7,8-tetrahydrofolate + NADP(+). It functions in the pathway pyrimidine metabolism; dTTP biosynthesis. Catalyzes the reductive methylation of 2'-deoxyuridine-5'-monophosphate (dUMP) to 2'-deoxythymidine-5'-monophosphate (dTMP) while utilizing 5,10-methylenetetrahydrofolate (mTHF) as the methyl donor, and NADPH and FADH(2) as the reductant. The chain is Flavin-dependent thymidylate synthase from Mycolicibacterium vanbaalenii (strain DSM 7251 / JCM 13017 / BCRC 16820 / KCTC 9966 / NRRL B-24157 / PYR-1) (Mycobacterium vanbaalenii).